Reading from the N-terminus, the 194-residue chain is ATP synthase subunit b 1 (194 aa).

A helical transmembrane segment spans residues 1 to 21 (MLLGTVVTVLSTLPAIAYAMD).

This sequence belongs to the ATPase B chain family. As to quaternary structure, F-type ATPases have 2 components, F(1) - the catalytic core - and F(0) - the membrane proton channel. F(1) has five subunits: alpha(3), beta(3), gamma(1), delta(1), epsilon(1). F(0) has three main subunits: a(1), b(2) and c(10-14). The alpha and beta chains form an alternating ring which encloses part of the gamma chain. F(1) is attached to F(0) by a central stalk formed by the gamma and epsilon chains, while a peripheral stalk is formed by the delta and b chains.

It is found in the cell inner membrane. F(1)F(0) ATP synthase produces ATP from ADP in the presence of a proton or sodium gradient. F-type ATPases consist of two structural domains, F(1) containing the extramembraneous catalytic core and F(0) containing the membrane proton channel, linked together by a central stalk and a peripheral stalk. During catalysis, ATP synthesis in the catalytic domain of F(1) is coupled via a rotary mechanism of the central stalk subunits to proton translocation. In terms of biological role, component of the F(0) channel, it forms part of the peripheral stalk, linking F(1) to F(0). The polypeptide is ATP synthase subunit b 1 (Granulibacter bethesdensis (strain ATCC BAA-1260 / CGDNIH1)).